The primary structure comprises 520 residues: GMP synthase [glutamine-hydrolyzing] (520 aa).

The region spanning 12–205 is the Glutamine amidotransferase type-1 domain; it reads KIIVLDYGSQ…AISICGARGD (194 aa). Cys-89 functions as the Nucleophile in the catalytic mechanism. Active-site residues include His-179 and Glu-181. The 190-residue stretch at 206–395 folds into the GMPS ATP-PPase domain; the sequence is WSMDNFIDME…LGMPDEVVWR (190 aa). Residue 233–239 participates in ATP binding; sequence SGGVDSS.

Homodimer.

It carries out the reaction XMP + L-glutamine + ATP + H2O = GMP + L-glutamate + AMP + diphosphate + 2 H(+). The protein operates within purine metabolism; GMP biosynthesis; GMP from XMP (L-Gln route): step 1/1. Its function is as follows. Catalyzes the synthesis of GMP from XMP. In Streptococcus equi subsp. zooepidemicus (strain H70), this protein is GMP synthase [glutamine-hydrolyzing].